Here is a 518-residue protein sequence, read N- to C-terminus: F-box protein At1g47056 (518 aa).

Residues 37-82 (PDYTSSLPDECLALVFQFLNSGNRKRCALVCRRWMIVEGQNRYRLS) form the F-box domain.

The protein is F-box protein At1g47056 of Arabidopsis thaliana (Mouse-ear cress).